The chain runs to 313 residues: Uracil-DNA glycosylase (313 aa).

Residues 35-68 (DEPMPKKCRRPAGPPKGFISTRGDTSPSSDNNHI) are disordered. Polar residues predominate over residues 56-68 (RGDTSPSSDNNHI). D153 serves as the catalytic Proton acceptor.

The protein belongs to the uracil-DNA glycosylase (UDG) superfamily. UNG family.

It is found in the host nucleus. The enzyme catalyses Hydrolyzes single-stranded DNA or mismatched double-stranded DNA and polynucleotides, releasing free uracil.. Functionally, excises uracil residues from the DNA which can arise as a result of misincorporation of dUMP residues by DNA polymerase or deamination of cytosines. Therefore may reduce deleterious uracil incorporation into the viral genome, particularly in terminally differentiated cells which lack DNA repair enzymes. In Gallus gallus (Chicken), this protein is Uracil-DNA glycosylase (MDV014).